The primary structure comprises 699 residues: Elongation factor G (699 aa).

In terms of domain architecture, tr-type G spans 8–283; it reads EHIRNIGICA…AVVDFLPSPI (276 aa). GTP contacts are provided by residues 17 to 24, 81 to 85, and 135 to 138; these read AHIDAGKT, DTPGH, and NKMD.

The protein belongs to the TRAFAC class translation factor GTPase superfamily. Classic translation factor GTPase family. EF-G/EF-2 subfamily.

Its subcellular location is the cytoplasm. Its function is as follows. Catalyzes the GTP-dependent ribosomal translocation step during translation elongation. During this step, the ribosome changes from the pre-translocational (PRE) to the post-translocational (POST) state as the newly formed A-site-bound peptidyl-tRNA and P-site-bound deacylated tRNA move to the P and E sites, respectively. Catalyzes the coordinated movement of the two tRNA molecules, the mRNA and conformational changes in the ribosome. The polypeptide is Elongation factor G (Rickettsia rickettsii (strain Iowa)).